The primary structure comprises 537 residues: Fucosyltransferase 6 (537 aa).

The Cytoplasmic portion of the chain corresponds to 1 to 20; that stretch reads MYHIFQISSEVFRAFGLKMK. A helical; Signal-anchor for type II membrane protein membrane pass occupies residues 21–41; that stretch reads ILLTLVFSGLLIWSVVLVSFS. The Lumenal segment spans residues 42–537; the sequence is NDFNNQLLVA…NDGLKLFDEL (496 aa). Residues Asn54, Asn231, and Asn378 are each glycosylated (N-linked (GlcNAc...) asparagine).

This sequence belongs to the glycosyltransferase 37 family. Expressed in roots and flowers.

It localises to the golgi apparatus. The protein localises to the golgi stack membrane. It functions in the pathway protein modification; protein glycosylation. May be involved in cell wall biosynthesis. May act as a fucosyltransferase. The sequence is that of Fucosyltransferase 6 (FUT6) from Arabidopsis thaliana (Mouse-ear cress).